Consider the following 38-residue polypeptide: Large ribosomal subunit protein bL36 (38 aa).

Belongs to the bacterial ribosomal protein bL36 family.

This is Large ribosomal subunit protein bL36 from Porphyromonas gingivalis (strain ATCC 33277 / DSM 20709 / CIP 103683 / JCM 12257 / NCTC 11834 / 2561).